We begin with the raw amino-acid sequence, 832 residues long: Serine/threonine-protein kinase Doa (832 aa).

Disordered stretches follow at residues 1-86, 135-158, 179-215, and 258-419; these read MVAA…SKYI, LLQH…QQYP, SDPF…KQAP, and SKIG…QLQQ. Residues 8–18 are compositionally biased toward polar residues; the sequence is VPTSSSSSAAT. Basic and acidic residues predominate over residues 20–32; the sequence is RQKDVDNKLEKCL. Composition is skewed to low complexity over residues 40-53, 137-158, and 183-203; these read TSSN…SNNN, QHQQ…QQYP, and MQQQ…KLQQ. Polar residues predominate over residues 271-282; it reads HSASFSSAQRPT. 3 stretches are compositionally biased toward low complexity: residues 285-310, 347-365, and 396-419; these read QFHQ…QHQH, QMQP…TQFQ, and SSSS…QLQQ. A Protein kinase domain is found at 479 to 799; it reads YKIMATLGEG…LGEALHHPFF (321 aa). Residues 485–493 and lysine 508 each bind ATP; that span reads LGEGTFGRV. Aspartate 605 acts as the Proton acceptor in catalysis. The interval 809–832 is disordered; the sequence is GEVSNKQPLSSGSSSRERSHSLSR. Over residues 823-832 the composition is skewed to basic and acidic residues; that stretch reads SRERSHSLSR.

This sequence belongs to the protein kinase superfamily. CMGC Ser/Thr protein kinase family. Lammer subfamily. In terms of assembly, interacts (via N-terminus) with x16 (via Arg/Ser-rich region). Interacts with eEF1gamma (via C-terminus); the interaction is probably direct, is transient and leads to phosphorylation of eEF1gamma by Doa. Requires Mg(2+) as cofactor. Autophosphorylated on serine, threonine and tyrosine residues. Ubiquitous expression in embryos. Stage 17 embryos show elevated expression in CNS and brain. Ubiquitous expression in larval imaginal disks. Increased expression posterior to the eye-antennal disk morphogenetic furrow.

The protein localises to the cytoplasm. It localises to the cytosol. The protein resides in the nucleus. It catalyses the reaction L-seryl-[protein] + ATP = O-phospho-L-seryl-[protein] + ADP + H(+). The catalysed reaction is L-threonyl-[protein] + ATP = O-phospho-L-threonyl-[protein] + ADP + H(+). The enzyme catalyses L-tyrosyl-[protein] + ATP = O-phospho-L-tyrosyl-[protein] + ADP + H(+). Functionally, dual specificity kinase involved in the negative regulation of microtubule-based transport through phsophorylation of the microtuble-binding protein eEF1gamma. May function in the control of alternative splicing by phosphorylating serine/arginine-rich splicing factors, the SR proteins, including x16. Negative regulator of the copia retrotransposon element of the white (w) gene. In the eye, it is required for normal pigmentation, photoreceptor cell development and for organization of interommatidial bristles. Also essential for embryonic segmentation and differentiation of the nervous system. In terms of biological role, may be the specific isoform involved in regulation of microtubule-based transport through phosphorylation of the microtubule binding protein eEF1gamma. This chain is Serine/threonine-protein kinase Doa, found in Drosophila melanogaster (Fruit fly).